Consider the following 356-residue polypeptide: Carbohydrate sulfotransferase 10 (356 aa).

Topologically, residues 1–6 (MHHQWL) are cytoplasmic. Residues 7 to 27 (LLAACFWVIFMFMVASKFITL) traverse the membrane as a helical; Signal-anchor for type II membrane protein segment. The Lumenal portion of the chain corresponds to 28–356 (TFKDPDVYSA…GYQKPDFLLN (329 aa)). N-linked (GlcNAc...) asparagine glycosylation is present at asparagine 99. 3'-phosphoadenylyl sulfate-binding positions include 127–133 (PKVGNTQ) and 189–197 (RDPFERLIS). Asparagine 228 and asparagine 316 each carry an N-linked (GlcNAc...) asparagine glycan.

The protein belongs to the sulfotransferase 2 family. As to expression, in fetal tissues, it is predominantly expressed in brain, and weakly expressed in lung, kidney and liver. In adult, it is highly expressed in brain, testis, ovary, expressed at intermediate level in heart, pancreas, skeletal muscle, spleen and thymus, and weakly expressed in other tissues. In brain, it is expressed at higher level in the frontal lobe.

The protein resides in the golgi apparatus membrane. The enzyme catalyses 3-O-{beta-D-GlcA-(1-&gt;[3)-alpha-D-Xyl-(1-&gt;3)-beta-D-GlcA-(1-&gt;](n)-4)-beta-D-Xyl-(1-&gt;4)-Rib-ol-P-Rib-ol-P-3-beta-D-GalNAc-(1-&gt;3)-beta-D-GlcNAc-(1-&gt;4)-O-6-P-alpha-D-Man}-L-Thr-[protein] + 3'-phosphoadenylyl sulfate = 3-O-{O-3-S-beta-D-GlcA-(1-&gt;[3)-alpha-D-Xyl-(1-&gt;3)-beta-D-GlcA-(1-&gt;](n)-4)-beta-D-Xyl-(1-&gt;4)-Rib-ol-P-Rib-ol-P-3-beta-D-GalNAc-(1-&gt;3)-beta-D-GlcNAc-(1-&gt;4)-O-6-P-alpha-D-Man}-L-Thr-[protein] + adenosine 3',5'-bisphosphate + H(+). It carries out the reaction 17beta-estradiol 3-O-(beta-D-glucuronate) + 3'-phosphoadenylyl sulfate = 17beta-estradiol 3-O-(3-sulfo-beta-D-glucuronate) + adenosine 3',5'-bisphosphate + H(+). The catalysed reaction is 17beta-estradiol 3-O-(beta-D-glucuronate) 17-sulfate + 3'-phosphoadenylyl sulfate = 17beta-estradiol 3-O-(3-sulfo-beta-D-glucuronate) 17-sulfate + adenosine 3',5'-bisphosphate + H(+). It catalyses the reaction 17beta-estradiol 17-O-(beta-D-glucuronate) + 3'-phosphoadenylyl sulfate = 17beta-estradiol 17-O-(3-sulfo-beta-D-glucuronate) + adenosine 3',5'-bisphosphate + H(+). The enzyme catalyses 16alpha,17beta-estriol 3-O-(beta-D-glucuronate) + 3'-phosphoadenylyl sulfate = 16alpha,17beta-estriol 3-O-(3-sulfo-beta-D-glucuronate) + adenosine 3',5'-bisphosphate + H(+). It carries out the reaction 16alpha,17beta-estriol 16-O-(beta-D-glucuronate) + 3'-phosphoadenylyl sulfate = 16alpha,17beta-estriol 16-O-(3-sulfo-beta-D-glucuronate) + adenosine 3',5'-bisphosphate + H(+). The catalysed reaction is 16alpha,17beta-estriol 17-O-(beta-D-glucuronate) + 3'-phosphoadenylyl sulfate = 16alpha,17beta-estriol 17-O-(3-sulfo-beta-D-glucuronate) + adenosine 3',5'-bisphosphate + H(+). It catalyses the reaction estrone 3-O-(beta-D-glucuronate) + 3'-phosphoadenylyl sulfate = estrone 3-O-(3-sulfo-beta-D-glucuronate) + adenosine 3',5'-bisphosphate + H(+). The enzyme catalyses 3alpha,20alpha-dihydroxy-5beta-pregnane 3-O-(beta-D-glucuronate) + 3'-phosphoadenylyl sulfate = 3alpha,20alpha-dihydroxy-5beta-pregnane 3-O-(3-sulfo-beta-D-glucuronate) + adenosine 3',5'-bisphosphate + H(+). It carries out the reaction testosterone 17-O-(beta-D-glucuronate) + 3'-phosphoadenylyl sulfate = testosterone 17-O-(3-sulfo-beta-D-glucuronate) + adenosine 3',5'-bisphosphate + H(+). The catalysed reaction is 3beta-androst-5-en-17-one 3-O-(beta-D-glucuronate) + 3'-phosphoadenylyl sulfate = 3beta-androst-5-en-17-one 3-O-(3-sulfo-beta-D-glucuronate) + adenosine 3',5'-bisphosphate + H(+). It catalyses the reaction 3alpha,17alpha-dihydroxy-5beta-androstane-11-one-17beta-carboxylate 3-O-(beta-D-glucuronate) + 3'-phosphoadenylyl sulfate = 3alpha,17alpha-dihydroxy-5beta-androstane-11-one-17beta-carboxylate 3-O-(3-sulfo-beta-D-glucuronate) + adenosine 3',5'-bisphosphate + H(+). The enzyme catalyses 3alpha-hydroxyetiocholan-17-one 3-O-(beta-D-glucuronate) + 3'-phosphoadenylyl sulfate = 3alpha-hydroxyetiocholan-17-one 3-O-(3-sulfo-beta-D-glucuronate) + adenosine 3',5'-bisphosphate + H(+). The protein operates within steroid metabolism. It participates in protein modification; carbohydrate sulfation. In terms of biological role, catalyzes the transfer of sulfate from 3'-phosphoadenylyl sulfate (PAPS) to position 3 of terminal glucuronic acid of both protein- and lipid-linked oligosaccharides. Participates in biosynthesis of HNK-1 carbohydrate structure 3-O-sulfo-beta-D-GlcA-(1-&gt;3)-beta-D-Gal-(1-&gt;4)-D-GlcNAc-R, a sulfated glucuronyl-lactosaminyl residue carried by many neural recognition molecules, which is involved in cell interactions during ontogenetic development and in synaptic plasticity in the adult. May be indirectly involved in synapse plasticity of the hippocampus, via its role in HNK-1 biosynthesis. Sulfates terminal glucuronyl residue of the laminin globular (LG)-domain binding epitope on DAG1/alpha-dystroglycan and prevents further polymerization by LARGE1 glycosyltransferase. Likely defines the chain length of LG epitope, conferring binding specificity to extracellular matrix components. Plays a role in down-regulating the steroid hormones. Sulfates glucuronidated estrogens and androgens with an impact in hormone cycle and fertility. Has a preference for glucuronyl moiety at the 3-hydroxyl group of a sterol ring rather than the 17-hydroxyl group, showing high catalytic efficiency for 17beta-estradiol 3-O-(beta-D-glucuronate) and dehydroepiandrosterone 3-O-(beta-D-glucuronate) hormones. The sequence is that of Carbohydrate sulfotransferase 10 from Homo sapiens (Human).